The chain runs to 118 residues: Large ribosomal subunit protein bL19 (118 aa).

It belongs to the bacterial ribosomal protein bL19 family.

Functionally, this protein is located at the 30S-50S ribosomal subunit interface and may play a role in the structure and function of the aminoacyl-tRNA binding site. The polypeptide is Large ribosomal subunit protein bL19 (Salinispora arenicola (strain CNS-205)).